The following is a 335-amino-acid chain: Coiled-coil domain-containing protein 68 (335 aa).

The stretch at 101–305 (QLLEMNKENE…KTQVALSSET (205 aa)) forms a coiled coil.

As to quaternary structure, interacts with CEP170. In terms of tissue distribution, expressed in bone marrow, colon, small intestine, spleen, testis, trachea and cutaneous T-cell lymphoma (CTCL).

It localises to the cytoplasm. It is found in the cytoskeleton. The protein localises to the microtubule organizing center. Its subcellular location is the centrosome. The protein resides in the centriole. In terms of biological role, centriolar protein required for centriole subdistal appendage assembly and microtubule anchoring in interphase cells. Together with CCDC120, cooperate with subdistal appendage components ODF2, NIN and CEP170 for hierarchical subdistal appendage assembly. The polypeptide is Coiled-coil domain-containing protein 68 (CCDC68) (Homo sapiens (Human)).